A 262-amino-acid chain; its full sequence is tRNA pseudouridine synthase A (262 aa).

Asp52 functions as the Nucleophile in the catalytic mechanism. Position 103 (Tyr103) interacts with substrate.

This sequence belongs to the tRNA pseudouridine synthase TruA family.

It catalyses the reaction uridine(38/39/40) in tRNA = pseudouridine(38/39/40) in tRNA. Formation of pseudouridine at positions 38, 39 and 40 in the anticodon stem and loop of transfer RNAs. This chain is tRNA pseudouridine synthase A, found in Methanococcus maripaludis (strain DSM 14266 / JCM 13030 / NBRC 101832 / S2 / LL).